A 314-amino-acid chain; its full sequence is MDQRLICSNAIKALKNLEENSIDLIITDPPYNLGKDYGTTDDNLNFNKYLEFSHEWLEECYRVLKPHGTIYIFMGMKYISYIYKILEQDLGMYFNSWITWYYTQGIGKTRGYSPRHDDILMFTKHPKKFTFNLDRIRVPQKYYRSVNNMRGANPSNVWEFSHVHYCNKNRKPHPTQKPEALYERMILASSNEGDIVLDPFVGSGTLNFVCKHLNRSGIGIDINKEYIEMAKERLDSEFNGFDSIDERMKRCPNDLSDPVIRKQYIINHINWFLKNHENAREEFLNEVKTKYYKKMTQEEKRLLDKENNLSFDFS.

Belongs to the N(4)/N(6)-methyltransferase family.

It catalyses the reaction a 2'-deoxyadenosine in DNA + S-adenosyl-L-methionine = an N(6)-methyl-2'-deoxyadenosine in DNA + S-adenosyl-L-homocysteine + H(+). Functionally, a beta subtype methylase that recognizes the double-stranded sequence 5'-GTTAAC-3', methylates A-5 on both strands, and protects the DNA from cleavage by the HpaI endonuclease. This chain is Type II methyltransferase M.HpaI (hpaIM), found in Haemophilus parainfluenzae.